The primary structure comprises 420 residues: Gamma-glutamyl phosphate reductase (420 aa).

This sequence belongs to the gamma-glutamyl phosphate reductase family.

The protein resides in the cytoplasm. It catalyses the reaction L-glutamate 5-semialdehyde + phosphate + NADP(+) = L-glutamyl 5-phosphate + NADPH + H(+). The protein operates within amino-acid biosynthesis; L-proline biosynthesis; L-glutamate 5-semialdehyde from L-glutamate: step 2/2. In terms of biological role, catalyzes the NADPH-dependent reduction of L-glutamate 5-phosphate into L-glutamate 5-semialdehyde and phosphate. The product spontaneously undergoes cyclization to form 1-pyrroline-5-carboxylate. This is Gamma-glutamyl phosphate reductase from Neisseria meningitidis serogroup A / serotype 4A (strain DSM 15465 / Z2491).